Reading from the N-terminus, the 225-residue chain is Uracil-DNA glycosylase 1 (225 aa).

The active-site Proton acceptor is D68.

Belongs to the uracil-DNA glycosylase (UDG) superfamily. UNG family.

The protein resides in the cytoplasm. It catalyses the reaction Hydrolyzes single-stranded DNA or mismatched double-stranded DNA and polynucleotides, releasing free uracil.. Its function is as follows. Excises uracil residues from the DNA which can arise as a result of misincorporation of dUMP residues by DNA polymerase or due to deamination of cytosine. The polypeptide is Uracil-DNA glycosylase 1 (ung1) (Streptomyces coelicolor (strain ATCC BAA-471 / A3(2) / M145)).